We begin with the raw amino-acid sequence, 1116 residues long: Electrogenic sodium bicarbonate cotransporter 4 (1116 aa).

Positions 1–14 (MKVDEEKAGVKKLD) are enriched in basic and acidic residues. Disordered regions lie at residues 1–92 (MKVD…TRSP), 222–257 (PIHR…STED), and 431–467 (PGQM…SGDE). Topologically, residues 1-515 (MKVDEEKAGV…YDGFHLQSIS (515 aa)) are cytoplasmic. A compositionally biased stretch (low complexity) spans 233 to 247 (SVSTTNRSSARSSSA). The segment covering 437–464 (SVGGGGASAGGGGSGGGAGGSGAGGVGS) has biased composition (gly residues). A helical transmembrane segment spans residues 516 to 536 (AVLFIYLGCITNAITFGGLLG). Over 537–558 (DATDNYQGVMESFLGTAMAGSL) the chain is Extracellular. A helical membrane pass occupies residues 559-579 (FCLFSGQPLIILSSTGPILIF). Residues 580–600 (EKLLFDFSKANGLDYMEFRLW) lie on the Cytoplasmic side of the membrane. Residues 601 to 621 (IGLHSAIQCLILVATDASFII) traverse the membrane as a helical segment. The Extracellular segment spans residues 622 to 631 (KYITRFTEEG). The helical transmembrane segment at 632–652 (FSTLISFIFIYDAIKKMIGAF) threads the bilayer. The Cytoplasmic segment spans residues 653-730 (KYYPINTDFK…GGRLLGSSCQ (78 aa)). The chain crosses the membrane as a helical span at residues 731-751 (FVPDLALMSFILFFGTYSMTL). Topologically, residues 752–768 (TLKKFKFSRYFPTKVRT) are extracellular. A helical membrane pass occupies residues 769–789 (LVADFSIVFSILLFCGIDACF). The Cytoplasmic portion of the chain corresponds to 790 to 819 (GLQTPKLHVPSVIKPTRPDRGWFVAPFGKN). Residues 820 to 840 (PWWVYPASILPALLVTILIFM) form a helical membrane-spanning segment. Topologically, residues 841-865 (DQQITAVIVNRKENKLRKAAGYHLD) are extracellular. A helical transmembrane segment spans residues 866-886 (LFWVGILMALCSFTGLPWYVA). Topologically, residues 887 to 922 (ATVISIAHIDSLKMETETSAPGEQPQFLGVREQRVT) are cytoplasmic. A helical membrane pass occupies residues 923–943 (GVMVFILTGISVFLAPILKYI). The Extracellular segment spans residues 944 to 945 (PM). The helical transmembrane segment at 946 to 966 (PVLYGVFLYMGVASLNGIQFW) threads the bilayer. At 967–987 (ERCKLFLMPAKHQPDHAFLRH) the chain is on the cytoplasmic side. The next 2 membrane-spanning stretches (helical) occupy residues 988–1008 (VPLR…ALLW) and 1009–1029 (ILKS…LIIV). The Cytoplasmic portion of the chain corresponds to 1030 to 1116 (RRLLDLIFSQ…KRSSSWSYSL (87 aa)).

The protein belongs to the anion exchanger (TC 2.A.31) family.

The protein resides in the apical cell membrane. It localises to the basolateral cell membrane. The enzyme catalyses 2 hydrogencarbonate(out) + Na(+)(out) = 2 hydrogencarbonate(in) + Na(+)(in). It carries out the reaction 3 hydrogencarbonate(out) + Na(+)(out) = 3 hydrogencarbonate(in) + Na(+)(in). Mediates sodium- and bicarbonate-dependent electrogenic sodium bicarbonate cotransport, with a Na(+):HCO3(-) stoichiometry varying from 1:2 to 1:3. The sequence is that of Electrogenic sodium bicarbonate cotransporter 4 (Slc4a5) from Mus musculus (Mouse).